Reading from the N-terminus, the 213-residue chain is ATP phosphoribosyltransferase (213 aa).

Belongs to the ATP phosphoribosyltransferase family. Short subfamily. In terms of assembly, heteromultimer composed of HisG and HisZ subunits.

It localises to the cytoplasm. The enzyme catalyses 1-(5-phospho-beta-D-ribosyl)-ATP + diphosphate = 5-phospho-alpha-D-ribose 1-diphosphate + ATP. Its pathway is amino-acid biosynthesis; L-histidine biosynthesis; L-histidine from 5-phospho-alpha-D-ribose 1-diphosphate: step 1/9. Its function is as follows. Catalyzes the condensation of ATP and 5-phosphoribose 1-diphosphate to form N'-(5'-phosphoribosyl)-ATP (PR-ATP). Has a crucial role in the pathway because the rate of histidine biosynthesis seems to be controlled primarily by regulation of HisG enzymatic activity. The protein is ATP phosphoribosyltransferase of Bacillus pumilus (strain SAFR-032).